Consider the following 342-residue polypeptide: Phosphate acyltransferase (342 aa).

It belongs to the PlsX family. Homodimer. Probably interacts with PlsY.

The protein localises to the cytoplasm. It carries out the reaction a fatty acyl-[ACP] + phosphate = an acyl phosphate + holo-[ACP]. Its pathway is lipid metabolism; phospholipid metabolism. Functionally, catalyzes the reversible formation of acyl-phosphate (acyl-PO(4)) from acyl-[acyl-carrier-protein] (acyl-ACP). This enzyme utilizes acyl-ACP as fatty acyl donor, but not acyl-CoA. This Shewanella pealeana (strain ATCC 700345 / ANG-SQ1) protein is Phosphate acyltransferase.